The following is a 328-amino-acid chain: PDZ and LIM domain protein 1 (328 aa).

The residue at position 2 (Thr2) is an N-acetylthreonine. The PDZ domain maps to 3–85; that stretch reads TLQIVLQGPG…NMTLTVARSE (83 aa). Phosphoserine is present on residues Ser90 and Ser130. Tyr144 carries the post-translational modification Phosphotyrosine. Residues 257–316 enclose the LIM zinc-binding domain; that stretch reads PMCDKCGTGIVGVFVKLRERHRHPECYVCTDCGTNLKQKGHFFVEDQIYCEKHARERVTP. 8 residues coordinate Zn(2+): Cys259, Cys262, His279, Cys282, Cys285, Cys288, Cys306, and His309. Thr315 carries the phosphothreonine modification. Residue Tyr320 is modified to Phosphotyrosine.

As to quaternary structure, interacts with ACTN1, ACTN2 and ACTN4. Interacts with PDLIM4.

The protein resides in the cytoplasm. It localises to the cytoskeleton. Its subcellular location is the myofibril. It is found in the sarcomere. The protein localises to the z line. Its function is as follows. Cytoskeletal protein that may act as an adapter that brings other proteins (like kinases) to the cytoskeleton. Involved in assembly, disassembly and directioning of stress fibers in fibroblasts. Required for the localization of ACTN1 and PALLD to stress fibers. Required for cell migration and in maintaining cell polarity of fibroblasts. In Bos taurus (Bovine), this protein is PDZ and LIM domain protein 1 (PDLIM1).